A 315-amino-acid polypeptide reads, in one-letter code: Adenine deaminase (315 aa).

Zn(2+) is bound by residues H14, H16, and H194. E197 serves as the catalytic Proton donor. D275 lines the Zn(2+) pocket. D276 contributes to the substrate binding site.

It belongs to the metallo-dependent hydrolases superfamily. Adenosine and AMP deaminases family. Adenine deaminase type 2 subfamily. Zn(2+) is required as a cofactor.

The enzyme catalyses adenine + H2O + H(+) = hypoxanthine + NH4(+). Catalyzes the hydrolytic deamination of adenine to hypoxanthine. Plays an important role in the purine salvage pathway and in nitrogen catabolism. In Pseudomonas putida (strain ATCC 47054 / DSM 6125 / CFBP 8728 / NCIMB 11950 / KT2440), this protein is Adenine deaminase.